Reading from the N-terminus, the 154-residue chain is Proteasome subunit beta type-4 (154 aa).

Methionine 1 is modified (N-acetylmethionine). Residues 1–45 (MESILESRSGHWAGGPAPGQFYRIPPTPGSIVDPXSVLYGSPITR) constitute a propeptide that is removed on maturation. At tyrosine 102 the chain carries Phosphotyrosine.

The protein belongs to the peptidase T1B family. As to quaternary structure, the 26S proteasome consists of a 20S proteasome core and two 19S regulatory subunits. The 20S proteasome core is a barrel-shaped complex made of 28 subunits that are arranged in four stacked rings. The two outer rings are each formed by seven alpha subunits, and the two inner rings are formed by seven beta subunits. The proteolytic activity is exerted by three beta-subunits PSMB5, PSMB6 and PSMB7. Forms a ternary complex with SMAD1 and OAZ1 before PSMB4 is incorporated into the 20S proteasome. Interacts with PRPF19.

The protein resides in the cytoplasm. Its subcellular location is the nucleus. In terms of biological role, non-catalytic component of the 20S core proteasome complex involved in the proteolytic degradation of most intracellular proteins. This complex plays numerous essential roles within the cell by associating with different regulatory particles. Associated with two 19S regulatory particles, forms the 26S proteasome and thus participates in the ATP-dependent degradation of ubiquitinated proteins. The 26S proteasome plays a key role in the maintenance of protein homeostasis by removing misfolded or damaged proteins that could impair cellular functions, and by removing proteins whose functions are no longer required. Associated with the PA200 or PA28, the 20S proteasome mediates ubiquitin-independent protein degradation. This type of proteolysis is required in several pathways including spermatogenesis (20S-PA200 complex) or generation of a subset of MHC class I-presented antigenic peptides (20S-PA28 complex). SMAD1/OAZ1/PSMB4 complex mediates the degradation of the CREBBP/EP300 repressor SNIP1. This Sus scrofa (Pig) protein is Proteasome subunit beta type-4 (PSMB4).